Consider the following 118-residue polypeptide: Fluoride-specific ion channel FluC 1 (118 aa).

The next 2 helical transmembrane spans lie at 5-25 (FLLV…ISVL) and 47-67 (FLLG…FLGT). 2 residues coordinate Na(+): glycine 71 and threonine 74. The chain crosses the membrane as a helical span at residues 98 to 118 (YLGFTYVFGLIAAFLGMMLGV).

The protein belongs to the fluoride channel Fluc/FEX (TC 1.A.43) family.

It localises to the cell membrane. The catalysed reaction is fluoride(in) = fluoride(out). With respect to regulation, na(+) is not transported, but it plays an essential structural role and its presence is essential for fluoride channel function. Fluoride-specific ion channel. Important for reducing fluoride concentration in the cell, thus reducing its toxicity. This Listeria monocytogenes serovar 1/2a (strain ATCC BAA-679 / EGD-e) protein is Fluoride-specific ion channel FluC 1.